The chain runs to 331 residues: Phenylalanine--tRNA ligase alpha subunit (331 aa).

E254 lines the Mg(2+) pocket.

This sequence belongs to the class-II aminoacyl-tRNA synthetase family. Phe-tRNA synthetase alpha subunit type 1 subfamily. In terms of assembly, tetramer of two alpha and two beta subunits. Requires Mg(2+) as cofactor.

It localises to the cytoplasm. The catalysed reaction is tRNA(Phe) + L-phenylalanine + ATP = L-phenylalanyl-tRNA(Phe) + AMP + diphosphate + H(+). The polypeptide is Phenylalanine--tRNA ligase alpha subunit (Blochmanniella pennsylvanica (strain BPEN)).